A 494-amino-acid chain; its full sequence is Tetracenomycin biosynthesis bifunctional cyclase/O-methyl transferase TcmN (494 aa).

The tract at residues 11 to 140 is polyketide cyclase; sequence VNAPFELVWD…TTTRANMERI (130 aa). The active-site Proton acceptor; for cyclase activity is the Ser67. Active-site proton donor; for cyclase activity residues include Arg69 and Arg82. The interval 169 to 494 is methyltransferase; it reads LLLAASGRLA…TWTTLECRPV (326 aa). Residues Asp358 and 384 to 386 each bind S-adenosyl-L-methionine; that span reads GDF. His405 functions as the Proton acceptor; for methyltransferase activity in the catalytic mechanism.

It in the C-terminal section; belongs to the class I-like SAM-binding methyltransferase superfamily. Cation-independent O-methyltransferase family. In terms of assembly, the tetracenomycin polyketide synthase (TCM PKS) is composed of a ketosynthase complex (TcmKL), an acyl carrier protein (TcmM), a cyclase (TcmN) and a probable second cyclase (TcmJ). TcmN is a homodimer in solution.

The catalysed reaction is 10 malonyl-CoA + 8 H(+) = tetracenomycin F2 + 10 CO2 + 10 CoA + 2 H2O. It functions in the pathway antibiotic biosynthesis; tetracenomycin C biosynthesis. Functionally, involved in the biosynthesis of tetracenomycin C (TCM C). Part of a type II polyketide synthase (PKS) that catalyzes the synthesis of tetracenomycin F2 (TCM F2), a precursor of TCM C, from malonyl-CoA. The TcmN N-terminal domain, when coupled with the other components of the PKS, catalyzes the cyclization and aromatization of the linear polyketide intermediate. Catalyzes the cyclization of the first and second rings. In addition, the C-terminal domain acts as a methyltransferase. It catalyzes the specific O-methylation of tetracenomycin D3 (TCM D3) to TCM B3, using S-adenosyl-L-methionine as the methyl donor. The protein is Tetracenomycin biosynthesis bifunctional cyclase/O-methyl transferase TcmN of Streptomyces glaucescens.